The following is a 158-amino-acid chain: Transcription elongation factor GreA (158 aa).

A coiled-coil region spans residues 53–73; the sequence is EQQSFVEGRIQEIEGKLSNAQ.

Belongs to the GreA/GreB family.

Its function is as follows. Necessary for efficient RNA polymerase transcription elongation past template-encoded arresting sites. The arresting sites in DNA have the property of trapping a certain fraction of elongating RNA polymerases that pass through, resulting in locked ternary complexes. Cleavage of the nascent transcript by cleavage factors such as GreA or GreB allows the resumption of elongation from the new 3'terminus. GreA releases sequences of 2 to 3 nucleotides. The sequence is that of Transcription elongation factor GreA from Alkalilimnicola ehrlichii (strain ATCC BAA-1101 / DSM 17681 / MLHE-1).